Here is a 260-residue protein sequence, read N- to C-terminus: Adenosylcobinamide-GDP ribazoletransferase (260 aa).

Transmembrane regions (helical) follow at residues 43–63 (LVGT…QFIF), 64–84 (PASV…GGFH), 117–137 (GSLA…ELAL), 143–163 (VAGG…SIIF), 197–217 (VICL…TLFV), and 237–257 (TLGA…LLLW).

This sequence belongs to the CobS family. Requires Mg(2+) as cofactor.

The protein resides in the cell inner membrane. It carries out the reaction alpha-ribazole + adenosylcob(III)inamide-GDP = adenosylcob(III)alamin + GMP + H(+). The enzyme catalyses alpha-ribazole 5'-phosphate + adenosylcob(III)inamide-GDP = adenosylcob(III)alamin 5'-phosphate + GMP + H(+). It participates in cofactor biosynthesis; adenosylcobalamin biosynthesis; adenosylcobalamin from cob(II)yrinate a,c-diamide: step 7/7. Its function is as follows. Joins adenosylcobinamide-GDP and alpha-ribazole to generate adenosylcobalamin (Ado-cobalamin). Also synthesizes adenosylcobalamin 5'-phosphate from adenosylcobinamide-GDP and alpha-ribazole 5'-phosphate. In Shewanella amazonensis (strain ATCC BAA-1098 / SB2B), this protein is Adenosylcobinamide-GDP ribazoletransferase.